Reading from the N-terminus, the 807-residue chain is Glycerol-3-phosphate acyltransferase (807 aa).

An HXXXXD motif motif is present at residues 308–313 (CHRSHM).

Belongs to the GPAT/DAPAT family.

It localises to the cell inner membrane. The catalysed reaction is sn-glycerol 3-phosphate + an acyl-CoA = a 1-acyl-sn-glycero-3-phosphate + CoA. The protein operates within phospholipid metabolism; CDP-diacylglycerol biosynthesis; CDP-diacylglycerol from sn-glycerol 3-phosphate: step 1/3. The protein is Glycerol-3-phosphate acyltransferase of Shewanella sp. (strain W3-18-1).